We begin with the raw amino-acid sequence, 226 residues long: 7-cyano-7-deazaguanine synthase (226 aa).

12–22 (LSGGLDSATVV) is a binding site for ATP. Residues Cys191, Cys201, Cys204, and Cys207 each coordinate Zn(2+).

The protein belongs to the QueC family. It depends on Zn(2+) as a cofactor.

It catalyses the reaction 7-carboxy-7-deazaguanine + NH4(+) + ATP = 7-cyano-7-deazaguanine + ADP + phosphate + H2O + H(+). Its pathway is purine metabolism; 7-cyano-7-deazaguanine biosynthesis. Functionally, catalyzes the ATP-dependent conversion of 7-carboxy-7-deazaguanine (CDG) to 7-cyano-7-deazaguanine (preQ(0)). In Pseudomonas syringae pv. tomato (strain ATCC BAA-871 / DC3000), this protein is 7-cyano-7-deazaguanine synthase.